The following is a 368-amino-acid chain: DNA replication and repair protein RecF (368 aa).

30–37 (GNNAQGKT) contributes to the ATP binding site.

Belongs to the RecF family.

Its subcellular location is the cytoplasm. Functionally, the RecF protein is involved in DNA metabolism; it is required for DNA replication and normal SOS inducibility. RecF binds preferentially to single-stranded, linear DNA. It also seems to bind ATP. This chain is DNA replication and repair protein RecF, found in Streptococcus pyogenes serotype M6 (strain ATCC BAA-946 / MGAS10394).